Here is a 548-residue protein sequence, read N- to C-terminus: Sesquiterpene synthase TPS1 (548 aa).

(2E,6E)-farnesyl diphosphate is bound by residues Arg264, Asp301, Asp305, Arg442, and Asp445. 2 residues coordinate Mg(2+): Asp301 and Asp305. Positions 301–305 (DDTYD) match the DDXXD motif motif. Positions 445 and 453 each coordinate Mg(2+).

This sequence belongs to the terpene synthase family. Tpsa subfamily. As to quaternary structure, monomer. It depends on Mg(2+) as a cofactor. As to expression, expressed in leaves and stems.

It localises to the cytoplasm. The enzyme catalyses (2E,6E)-farnesyl diphosphate = germacrene D + diphosphate. It carries out the reaction (2E,6E)-farnesyl diphosphate = (-)-(E)-beta-caryophyllene + diphosphate. It catalyses the reaction (2E,6E)-farnesyl diphosphate = beta-copaene + diphosphate. It participates in secondary metabolite biosynthesis; terpenoid biosynthesis. Functionally, sesquiterpene synthase involved in the biosynthesis of volatile compounds. Mediates the conversion of (2E,6E)-farnesyl diphosphate (FPP) into germacrene D, (-)-(E)-beta-caryophyllene and beta-copaene. In Xanthium strumarium (Rough cocklebur), this protein is Sesquiterpene synthase TPS1.